A 262-amino-acid polypeptide reads, in one-letter code: S-methyl-5'-thioadenosine phosphorylase (262 aa).

Phosphate contacts are provided by residues serine 12, 54–55 (RH), and 87–88 (SA). Methionine 185 contributes to the substrate binding site. Threonine 186 lines the phosphate pocket. 209–211 (DYD) serves as a coordination point for substrate.

This sequence belongs to the PNP/MTAP phosphorylase family. MTAP subfamily. As to quaternary structure, homohexamer. Dimer of a homotrimer.

The enzyme catalyses S-methyl-5'-thioadenosine + phosphate = 5-(methylsulfanyl)-alpha-D-ribose 1-phosphate + adenine. The protein operates within amino-acid biosynthesis; L-methionine biosynthesis via salvage pathway; S-methyl-5-thio-alpha-D-ribose 1-phosphate from S-methyl-5'-thioadenosine (phosphorylase route): step 1/1. Catalyzes the reversible phosphorylation of S-methyl-5'-thioadenosine (MTA) to adenine and 5-methylthioribose-1-phosphate. Involved in the breakdown of MTA, a major by-product of polyamine biosynthesis. Responsible for the first step in the methionine salvage pathway after MTA has been generated from S-adenosylmethionine. Has broad substrate specificity with 6-aminopurine nucleosides as preferred substrates. This chain is S-methyl-5'-thioadenosine phosphorylase, found in Thermofilum pendens (strain DSM 2475 / Hrk 5).